We begin with the raw amino-acid sequence, 860 residues long: Late endosome and vacuole interface protein 11 (860 aa).

A disordered region spans residues 19-45; that stretch reads EIINNSDHSSSHSTSHEEEDEEEDDTE. Over residues 20–31 the composition is skewed to low complexity; that stretch reads IINNSDHSSSHS. Residues 35 to 45 show a composition bias toward acidic residues; that stretch reads EEEDEEEDDTE. A BED-type zinc finger spans residues 84–138; that stretch reads KNIAKFWSHFLAIEKKLTKVKCKHCGEILTRSDASLTKTFRSHLKTKHNISANKN. Cys-105, Cys-108, His-126, and His-131 together coordinate Zn(2+).

The protein belongs to the VID22 family.

The protein localises to the nucleus. Functionally, involved in vacuolar processing and morphology. The protein is Late endosome and vacuole interface protein 11 (ENV11) of Saccharomyces cerevisiae (strain ATCC 204508 / S288c) (Baker's yeast).